A 345-amino-acid polypeptide reads, in one-letter code: Fructose-bisphosphate aldolase (345 aa).

Ser-53 contacts D-glyceraldehyde 3-phosphate. Catalysis depends on Asp-95, which acts as the Proton donor. The Zn(2+) site is built by His-96, Asp-131, Glu-161, and His-212. Dihydroxyacetone phosphate is bound at residue Gly-213. His-252 contributes to the Zn(2+) binding site. Dihydroxyacetone phosphate-binding positions include 253 to 255 (GGS) and 274 to 277 (NVDT).

This sequence belongs to the class II fructose-bisphosphate aldolase family. Zn(2+) serves as cofactor.

The catalysed reaction is beta-D-fructose 1,6-bisphosphate = D-glyceraldehyde 3-phosphate + dihydroxyacetone phosphate. It participates in carbohydrate degradation; glycolysis; D-glyceraldehyde 3-phosphate and glycerone phosphate from D-glucose: step 4/4. Functionally, catalyzes the aldol condensation of dihydroxyacetone phosphate (DHAP or glycerone-phosphate) with glyceraldehyde 3-phosphate (G3P) to form fructose 1,6-bisphosphate (FBP) in gluconeogenesis and the reverse reaction in glycolysis. The polypeptide is Fructose-bisphosphate aldolase (fba) (Mycobacterium leprae (strain TN)).